A 218-amino-acid polypeptide reads, in one-letter code: Thiopurine S-methyltransferase (218 aa).

S-adenosyl-L-methionine contacts are provided by Trp-10, Leu-45, Glu-66, and Arg-123.

It belongs to the class I-like SAM-binding methyltransferase superfamily. TPMT family.

Its subcellular location is the cytoplasm. It catalyses the reaction S-adenosyl-L-methionine + a thiopurine = S-adenosyl-L-homocysteine + a thiopurine S-methylether.. This is Thiopurine S-methyltransferase from Pseudomonas aeruginosa (strain LESB58).